The sequence spans 411 residues: 3-phosphoshikimate 1-carboxyvinyltransferase (411 aa).

3-phosphoshikimate-binding residues include lysine 20, serine 21, and arginine 25. Lysine 20 lines the phosphoenolpyruvate pocket. Glycine 86 and arginine 114 together coordinate phosphoenolpyruvate. Residues serine 156, serine 157, glutamine 158, serine 181, aspartate 295, and lysine 322 each coordinate 3-phosphoshikimate. Residue glutamine 158 participates in phosphoenolpyruvate binding. Catalysis depends on aspartate 295, which acts as the Proton acceptor. Residues arginine 326, arginine 367, and lysine 393 each coordinate phosphoenolpyruvate.

Belongs to the EPSP synthase family. Monomer.

It localises to the cytoplasm. The enzyme catalyses 3-phosphoshikimate + phosphoenolpyruvate = 5-O-(1-carboxyvinyl)-3-phosphoshikimate + phosphate. Its pathway is metabolic intermediate biosynthesis; chorismate biosynthesis. Catalyzes the transfer of the enolpyruvyl moiety of phosphoenolpyruvate (PEP) to the 5-hydroxyl of shikimate-3-phosphate (S3P) to produce enolpyruvyl shikimate-3-phosphate and inorganic phosphate. The polypeptide is 3-phosphoshikimate 1-carboxyvinyltransferase (Picrophilus torridus (strain ATCC 700027 / DSM 9790 / JCM 10055 / NBRC 100828 / KAW 2/3)).